The primary structure comprises 284 residues: Expansin-A17 (284 aa).

The first 21 residues, 1 to 21, serve as a signal peptide directing secretion; the sequence is MASSWNNPAIFLAAALAVATA. The Expansin-like EG45 domain occupies 71–185; it reads GGACGYVSND…RRVPCQRTGG (115 aa). Residues 195-279 form the Expansin-like CBD domain; the sequence is YWLLLYVMNV…WWITGLCYQG (85 aa).

It belongs to the expansin family. Expansin A subfamily. Expressed in roots.

The protein resides in the secreted. Its subcellular location is the cell wall. The protein localises to the membrane. Its function is as follows. May cause loosening and extension of plant cell walls by disrupting non-covalent bonding between cellulose microfibrils and matrix glucans. No enzymatic activity has been found. May be required for rapid internodal elongation in deepwater rice during submergence. The polypeptide is Expansin-A17 (EXPA17) (Oryza sativa subsp. japonica (Rice)).